A 288-amino-acid chain; its full sequence is Alpha/beta hydrolase domain-containing protein 17B (288 aa).

Catalysis depends on charge relay system residues S170, D235, and H264.

Belongs to the AB hydrolase superfamily. ABHD17 family. Post-translationally, palmitoylated on cysteine residues located in a cysteine cluster at the N-terminus which promotes membrane localization.

It localises to the cell membrane. Its subcellular location is the recycling endosome membrane. The protein resides in the cell projection. It is found in the dendritic spine. The protein localises to the postsynaptic density membrane. It carries out the reaction S-hexadecanoyl-L-cysteinyl-[protein] + H2O = L-cysteinyl-[protein] + hexadecanoate + H(+). Hydrolyzes fatty acids from S-acylated cysteine residues in proteins. Has depalmitoylating activity towards nras. In Xenopus laevis (African clawed frog), this protein is Alpha/beta hydrolase domain-containing protein 17B.